A 955-amino-acid chain; its full sequence is UPF0182 protein PMT_0755 (955 aa).

The next 9 helical transmembrane spans lie at 25–45, 58–78, 107–127, 146–166, 178–198, 214–234, 264–284, 313–333, and 340–360; these read LLLSIAAFCLLMRVQVEWLWF, WLWQLGGLLLALLVVATCQLW, LLGCFVVVVGDLVLLSRLAWL, IWALVIPLSCVFISICVMLGN, CFCFSISIARGWGLWALALAI, FGLGQFPALAFALVVLLAQLI, CNFLRPLIGIILLTLSALLWL, SLASLAILVFAFLVIPFTWIQ, and LIASIIGVGAILLEVLLAPFV.

The protein belongs to the UPF0182 family.

It localises to the cell membrane. This Prochlorococcus marinus (strain MIT 9313) protein is UPF0182 protein PMT_0755.